A 55-amino-acid polypeptide reads, in one-letter code: Large ribosomal subunit protein bL32c (55 aa).

It belongs to the bacterial ribosomal protein bL32 family.

It localises to the plastid. Its subcellular location is the chloroplast. The chain is Large ribosomal subunit protein bL32c from Nicotiana sylvestris (Wood tobacco).